Here is a 401-residue protein sequence, read N- to C-terminus: Probable peptidoglycan glycosyltransferase FtsW (401 aa).

Topologically, residues 1 to 26 (MAEVLRWLRLDLGQSGGLAWERLDWR) are cytoplasmic. The helical transmembrane segment at 27–47 (LALTVLALAGLGLVMVGSASV) threads the bilayer. Over 48-65 (SIAEGATGDPLHYLYRQA) the chain is Periplasmic. Residues 66–86 (VFLAVALMAAVACLHLSLDQF) form a helical membrane-spanning segment. At 87–88 (YR) the chain is on the cytoplasmic side. Residues 89–109 (GGPVLLVLGFFLLLVVLIPGV) traverse the membrane as a helical segment. Topologically, residues 110–118 (GREVNGATR) are periplasmic. A helical transmembrane segment spans residues 119 to 139 (WIPLGLINLQVAEVARVCFII). The Cytoplasmic segment spans residues 140–154 (YLAGYCVRRHAELPN). The helical transmembrane segment at 155 to 175 (TSSAFAVPLAVFSLAAVLLLA) threads the bilayer. Over 176-180 (QPDFG) the chain is Periplasmic. Residues 181–201 (TALVLMATALGLLFLAGASLW) form a helical membrane-spanning segment. Position 202 (R202) is a topological domain, cytoplasmic. A helical transmembrane segment spans residues 203-223 (IGVLGLLLAGAAWLLIVGSPY). Over 224 to 278 (RWQRLTTFTDPWADPFNAGFQLTQSLIAIGRGEWFGVGLGASVQKLFYLPEAHTD) the chain is Periplasmic. The chain crosses the membrane as a helical span at residues 279–299 (FLFAVLAEELGLLGVVVVVAL). At 300–322 (FTYLAWRGMQIGLASLRADRPFG) the chain is on the cytoplasmic side. The chain crosses the membrane as a helical span at residues 323–343 (AYLAWGLTISIGLQAFINMAV). Residues 344 to 354 (TMGLLPTKGLT) lie on the Periplasmic side of the membrane. The chain crosses the membrane as a helical span at residues 355–375 (LPLMSYGGSSLIMTGIALALL). Over 376-401 (LRVDYEARLAAQQPRPRKRPSGRVRP) the chain is Cytoplasmic.

Belongs to the SEDS family. FtsW subfamily.

The protein resides in the cell inner membrane. It catalyses the reaction [GlcNAc-(1-&gt;4)-Mur2Ac(oyl-L-Ala-gamma-D-Glu-L-Lys-D-Ala-D-Ala)](n)-di-trans,octa-cis-undecaprenyl diphosphate + beta-D-GlcNAc-(1-&gt;4)-Mur2Ac(oyl-L-Ala-gamma-D-Glu-L-Lys-D-Ala-D-Ala)-di-trans,octa-cis-undecaprenyl diphosphate = [GlcNAc-(1-&gt;4)-Mur2Ac(oyl-L-Ala-gamma-D-Glu-L-Lys-D-Ala-D-Ala)](n+1)-di-trans,octa-cis-undecaprenyl diphosphate + di-trans,octa-cis-undecaprenyl diphosphate + H(+). The protein operates within cell wall biogenesis; peptidoglycan biosynthesis. Its function is as follows. Peptidoglycan polymerase that is essential for cell division. The protein is Probable peptidoglycan glycosyltransferase FtsW of Alkalilimnicola ehrlichii (strain ATCC BAA-1101 / DSM 17681 / MLHE-1).